A 245-amino-acid polypeptide reads, in one-letter code: 1-(5-phosphoribosyl)-5-[(5-phosphoribosylamino)methylideneamino] imidazole-4-carboxamide isomerase (245 aa).

The active-site Proton acceptor is D7. Catalysis depends on D129, which acts as the Proton donor.

Belongs to the HisA/HisF family.

The protein resides in the cytoplasm. The enzyme catalyses 1-(5-phospho-beta-D-ribosyl)-5-[(5-phospho-beta-D-ribosylamino)methylideneamino]imidazole-4-carboxamide = 5-[(5-phospho-1-deoxy-D-ribulos-1-ylimino)methylamino]-1-(5-phospho-beta-D-ribosyl)imidazole-4-carboxamide. Its pathway is amino-acid biosynthesis; L-histidine biosynthesis; L-histidine from 5-phospho-alpha-D-ribose 1-diphosphate: step 4/9. The protein is 1-(5-phosphoribosyl)-5-[(5-phosphoribosylamino)methylideneamino] imidazole-4-carboxamide isomerase of Vibrio vulnificus (strain CMCP6).